Here is a 444-residue protein sequence, read N- to C-terminus: Divalent metal cation transporter MntH (444 aa).

Transmembrane regions (helical) follow at residues 39–59 (LLFA…GNFA), 69–89 (GYTL…FQAL), 109–128 (FSRP…AMAT), 146–166 (LPLI…LLFE), 175–195 (LVIG…MFIA), 215–235 (TALT…AVYL), 264–284 (VILA…MAAS), 304–324 (TPLL…TSGI), 346–366 (IPVW…ILAG), 372–392 (ALVI…IALI), and 417–437 (AAAI…GFTI).

Belongs to the NRAMP family.

The protein localises to the cell inner membrane. In terms of biological role, h(+)-stimulated, divalent metal cation uptake system. The chain is Divalent metal cation transporter MntH from Granulibacter bethesdensis (strain ATCC BAA-1260 / CGDNIH1).